A 438-amino-acid polypeptide reads, in one-letter code: Transcription termination factor Rho (438 aa).

The region spanning 70–145 (YILFTGILEI…LKIEAINYLP (76 aa)) is the Rho RNA-BD domain. Residues 188-193 (GKGQRA), 200-205 (RTGKTE), and arginine 231 each bind ATP.

It belongs to the Rho family. In terms of assembly, homohexamer. The homohexamer assembles into an open ring structure.

In terms of biological role, facilitates transcription termination by a mechanism that involves Rho binding to the nascent RNA, activation of Rho's RNA-dependent ATPase activity, and release of the mRNA from the DNA template. This is Transcription termination factor Rho from Helicobacter pylori (strain J99 / ATCC 700824) (Campylobacter pylori J99).